Reading from the N-terminus, the 130-residue chain is Small ribosomal subunit protein uS11 (130 aa).

Positions I108 to V130 are disordered.

Belongs to the universal ribosomal protein uS11 family. As to quaternary structure, part of the 30S ribosomal subunit.

Located on the platform of the 30S subunit. The sequence is that of Small ribosomal subunit protein uS11 from Methanothermobacter thermautotrophicus (strain ATCC 29096 / DSM 1053 / JCM 10044 / NBRC 100330 / Delta H) (Methanobacterium thermoautotrophicum).